The chain runs to 854 residues: MAEGFAANRQWIGPEEAEELLDFDIAIQMNEEGPLNPGVNPFRVPGITEAEKQEYCNILQPKLQDLKGKIQEVKLEEGNAGKFRRARFLRYSDETVLSLIHLFIGYCPHLCRRHELGSLRHDIDIEALQEERYNDREKGITDNIKYGKRCLIGTAVLYLLLSLGIIIHTCKAQVVWRLPPLVVPVEESEIIFWDCWAPEEPACQDFLGAMIHLKASTNISIQEGPTLGNWAREIWGTLFKKATRQCRRGRIWRRWNETITGPLGCANNTCYNISVIVPDYQCYLDRVDTWLQGKVNISLCLTGGKMLYNKETKQLSYCTDPLQIPLINYTFGPNQTCMWNTSQIQDPEIPKCGWWNQNAYYNSCRWEHTDVQFQCQRTQSQPGSWIRAISSWKQRNRWEWRPDFESEKVKVSLQCNSTKNLTFAMRSSGDYGEVTGAWIEFGCHRTKSKYHTEARFRIRCRWNVGDNTSLIDTCGETQNVSRANPVDCTMYANRMYNCSLQNGFTMKVDDLIMHFNKTKAVEMYNIAGNWSCKSDLPPTWGYMNCNCTNSTNSGTGIRMACPRNQGILRNWYNPVAGLRQSLEKYQVVKQPDYLVVPGEVMEYKPRRKRAAIHVMLALATVLSMAGAGTGATAIGMVTQYQQVLATHQEAIEKVTEALKINNLRLVTLEHQVLVIGLKVEAMEKFLYTAFAMQELGCNQNQFFCKVPSALWERYNMTINQTIWNHGNITLGEWYNQTKDLQQRFYEIIMDIEQNNVQGKKGLQQLQEWEDWVGWIGNIPQYLKGLLGGILGIGLGMLLLILCLPTLVDCIRNCIHKILGYTVIAMPEVEEEEIQPQMELRRNGRQCGMSEKEEE.

Over 1-783 (MAEGFAANRQ…WIGNIPQYLK (783 aa)) the chain is Extracellular. 15 N-linked (GlcNAc...) asparagine; by host glycosylation sites follow: asparagine 218, asparagine 256, asparagine 267, asparagine 272, asparagine 296, asparagine 328, asparagine 334, asparagine 340, asparagine 416, asparagine 420, asparagine 479, asparagine 497, asparagine 529, asparagine 546, and asparagine 549. A fusion peptide region spans residues 614–634 (VMLALATVLSMAGAGTGATAI). The stretch at 641–691 (QQVLATHQEAIEKVTEALKINNLRLVTLEHQVLVIGLKVEAMEKFLYTAFA) forms a coiled coil. Residues 660–678 (INNLRLVTLEHQVLVIGLK) form an immunosuppression region. Asparagine 715, asparagine 719, asparagine 727, and asparagine 735 each carry an N-linked (GlcNAc...) asparagine; by host glycan. Residues 734-770 (YNQTKDLQQRFYEIIMDIEQNNVQGKKGLQQLQEWED) adopt a coiled-coil conformation. A helical transmembrane segment spans residues 784–804 (GLLGGILGIGLGMLLLILCLP). Over 805 to 854 (TLVDCIRNCIHKILGYTVIAMPEVEEEEIQPQMELRRNGRQCGMSEKEEE) the chain is Cytoplasmic.

As to quaternary structure, the mature envelope protein (Env) consists of a trimer of SU-TM heterodimers attached by noncovalent interactions or by a labile interchain disulfide bond. In terms of processing, specific enzymatic cleavages in vivo yield mature proteins. Envelope glycoproteins are synthesized as an inactive precursor that is N-glycosylated and processed likely by host cell furin or by a furin-like protease in the Golgi to yield the mature SU and TM proteins. The cleavage site between SU and TM requires the minimal sequence [KR]-X-[KR]-R.

The protein resides in the virion membrane. It is found in the host cell membrane. The surface protein (SU) attaches the virus to the host cell by binding to its receptor. This interaction triggers the refolding of the transmembrane protein (TM) and is thought to activate its fusogenic potential by unmasking its fusion peptide. Fusion occurs at the host cell plasma membrane. In terms of biological role, the transmembrane protein (TM) acts as a class I viral fusion protein. Under the current model, the protein has at least 3 conformational states: pre-fusion native state, pre-hairpin intermediate state, and post-fusion hairpin state. During viral and target cell membrane fusion, the coiled coil regions (heptad repeats) assume a trimer-of-hairpins structure, positioning the fusion peptide in close proximity to the C-terminal region of the ectodomain. The formation of this structure appears to drive apposition and subsequent fusion of viral and target cell membranes. Membranes fusion leads to delivery of the nucleocapsid into the cytoplasm. The sequence is that of Envelope glycoprotein gp150 (env) from Feline immunodeficiency virus (isolate Wo) (FIV).